The primary structure comprises 339 residues: Diguanylate cyclase VdcA (339 aa).

The 134-residue stretch at 206-339 (QQVSLIMLDI…NLGRNRVMPL (134 aa)) folds into the GGDEF domain. Asp-214 provides a ligand contact to Mg(2+). Substrate-binding residues include Asn-222 and Asp-231. A Mg(2+)-binding site is contributed by Glu-257. The Proton acceptor role is filled by Glu-257.

The cofactor is Mg(2+).

It catalyses the reaction 2 GTP = 3',3'-c-di-GMP + 2 diphosphate. It functions in the pathway purine metabolism; 3',5'-cyclic di-GMP biosynthesis. Functionally, diguanylate cyclase (DGC) that catalyzes the synthesis of cyclic diguanylate (c-di-GMP) via the condensation of 2 GTP molecules. Is involved in the modulation of intracellular c-di-GMP levels. Cyclic-di-GMP is a second messenger which positively regulates biofilm formation and negatively regulates virulence in V.cholerae, and is proposed to play an important role in the transition from persistence in the environment to survival in the host. Overexpression of vdcA results in increased biofilm formation, and reduced motility and virulence. This is Diguanylate cyclase VdcA (vdcA) from Vibrio cholerae serotype O1 (strain ATCC 39315 / El Tor Inaba N16961).